A 308-amino-acid polypeptide reads, in one-letter code: Glycine--tRNA ligase alpha subunit (308 aa).

The protein belongs to the class-II aminoacyl-tRNA synthetase family. Tetramer of two alpha and two beta subunits.

The protein resides in the cytoplasm. The enzyme catalyses tRNA(Gly) + glycine + ATP = glycyl-tRNA(Gly) + AMP + diphosphate. The polypeptide is Glycine--tRNA ligase alpha subunit (Brevibacillus brevis (strain 47 / JCM 6285 / NBRC 100599)).